The primary structure comprises 577 residues: MNNYQVKAIKEKTQQYLSKRKFEDALTFITKTIEQEPNPTIDLFELRAQVYEKSGQYSQAELDAKRMIHLNARNARGYLRLGKLLQLDGFDKKADQLYTQGLRMVHKMDPLRPVLKKVSQRLNERILRTRPVLDLFRILPREVLLCILQQLNFKSIVQCMQVCKHWRDCIKKEPSLFCCLDFSCASPRSVNSRDRNVMAVARYSVYSKDNIQEVIGLEKLGILTPTKALLRSVKSLKVYKTISPLHTQSTDKLYTIWTPFSELHYFYCATPITFSIASKILSCCKKLKQVELVDLIPDLIFDSMDWDKLFNAESVPLALKSLTFIRNQKFPFHHKEQQFLKDLLSASPYLEYLEASYQSDLVAAIKKYKINLRSLIIIDEGVSNTVKDLAFLPQSLTTLIVKPCNPASTILCPYLFPTNVRMESLINLELFLYLRLSQNDIDNVVKFLTSCYKLKKLVLHDSLALAPHFFEIFASLPELEHLEIPDNVALQNKHAIHITDCCPNLKYVNFSNSISLDGSGFIAVLRGLKELKRIDIINCDSVSRDAIDWARSKGMQVTVASSLPNSQPLGTKKIRLI.

3 TPR repeats span residues V6 to P39, I41 to N74, and R76 to M108. An F-box domain is found at I138–L180.

A part of the E3 ubiquitin ligase Skp1-Cullin-1-F-box (SCF) complex. Interacts with cul1, mcl1 and skp1.

It is found in the mitochondrion. It localises to the nucleus. Has a role in substrate recognition in the Skp1-Cullin-1/Cdc53-F-box (SCF) ubiquitin ligase complex. Required for the maintenance of telomere length and transcriptional silencing at the telomere. Also required for chromosome segregation. The sequence is that of F-box/TPR repeat protein pof3 (pof3) from Schizosaccharomyces pombe (strain 972 / ATCC 24843) (Fission yeast).